The sequence spans 299 residues: ATP phosphoribosyltransferase (299 aa).

It belongs to the ATP phosphoribosyltransferase family. Long subfamily. Mg(2+) is required as a cofactor.

It is found in the cytoplasm. It catalyses the reaction 1-(5-phospho-beta-D-ribosyl)-ATP + diphosphate = 5-phospho-alpha-D-ribose 1-diphosphate + ATP. Its pathway is amino-acid biosynthesis; L-histidine biosynthesis; L-histidine from 5-phospho-alpha-D-ribose 1-diphosphate: step 1/9. Its activity is regulated as follows. Feedback inhibited by histidine. In terms of biological role, catalyzes the condensation of ATP and 5-phosphoribose 1-diphosphate to form N'-(5'-phosphoribosyl)-ATP (PR-ATP). Has a crucial role in the pathway because the rate of histidine biosynthesis seems to be controlled primarily by regulation of HisG enzymatic activity. The protein is ATP phosphoribosyltransferase of Actinobacillus pleuropneumoniae serotype 7 (strain AP76).